A 266-amino-acid polypeptide reads, in one-letter code: Ankyrin repeat domain-containing protein 45 (266 aa).

Composition is skewed to acidic residues over residues 1 to 11 (MESEGPPESES) and 18 to 32 (QEEE…EPEE). Positions 1-43 (MESEGPPESESSEFFSQQEEENEEEEAQEPEETGPKNPLLQPA) are disordered. ANK repeat units lie at residues 76 to 105 (VGRN…NLNE) and 109 to 138 (RGYT…DIEA).

It is found in the cytoplasm. Its subcellular location is the midbody. It localises to the midbody ring. The protein resides in the cleavage furrow. In terms of biological role, may play a role during cell division. The sequence is that of Ankyrin repeat domain-containing protein 45 from Homo sapiens (Human).